Consider the following 1007-residue polypeptide: MKLSSACAIALLAAQAAGASIKHRINGFTLTEHSDPAKRELLQKYVTWDDKSLFINGERIMIFSGEFHPFRLPVKELQLDIFQKVKALGFNCVSFYVDWALVEGKPGEYRADGIFDLEPFFDAASEAGIYLLARPGPYINAESSGGGFPGWLQRVNGTLRSSDKAYLDATDNYVSHVAATIAKYQITNGGPIILYQPENEYTSGCCGVEFPDPVYMQYVEDQARNAGVVIPLINNDASASGNNAPGTGKGAVDIYGHDSYPLGFDCANPTVWPSGDLPTNFRTLHLEQSPTTPYAIVEFQGGSYDPWGGPGFAACSELLNNEFERVFYKNDFSFQIAIMNLYMIFGGTNWGNLGYPNGYTSYDYGSAVTESRNITREKYSELKLLGNFAKVSPGYLTASPGNLTTSGYADTTDLTVTPLLGNSTGSFFVVRHSDYSSEESTSYKLRLPTSAGSVTIPQLGGTLTLNGRDSKIHVTDYNVSGTNIIYSTAEVFTWKKFADGKVLVLYGGAGEHHELAISTKSNVTVIEGSESGISSKQTSSSVVVGWDVSTTRRIIQVGDLKILLLDRNSAYNYWVPQLATDGTSPGFSTPEKVASSIIVKAGYLVRTAYLKGSGLYLTADFNATTSVEVIGVPSTAKNLFINGDKTSHTVDKNGIWSATVDYNAPDISLPSLKDLDWKYVDTLPEIQSSYDDSLWPAADLKQTKNTLRSLTTPTSLYSSDYGFHTGYLLYRGHFTATGNESTFAIDTQGGSAFGSSVWLNGTYLGSWTGLYANSDYNATYNLPQLQAGKTYVITVVIDNMGLEENWTVGEDLMKTPRGILNFLLAGRPSSAISWKLTGNLGGEDYEDKVRGPLNEGGLYAERQGFHQPEPPSQNWKSSSPLEGLSEAGIGFYSASFDLDLPKGWDVPLFLNIGNSTTPSPYRVQVYVNGYQYAKYISNIGPQTSFPVPEGILNYRGTNWLAVTLWALDSAGGKLESLELSYTTPVLTALGEVESVDQPKYKKRKGAY.

The signal sequence occupies residues 1–18 (MKLSSACAIALLAAQAAG). Substrate is bound by residues Tyr-96 and 140 to 142 (NAE). A glycan (N-linked (GlcNAc...) asparagine) is linked at Asn-156. Asn-199 contacts substrate. The active-site Proton donor is Glu-200. 2 disulfides stabilise this stretch: Cys-205/Cys-206 and Cys-266/Cys-315. The Nucleophile role is filled by Glu-298. Tyr-364 provides a ligand contact to substrate. N-linked (GlcNAc...) asparagine glycosylation is found at Asn-402, Asn-422, Asn-478, Asn-522, Asn-622, Asn-739, Asn-760, Asn-777, Asn-805, and Asn-914.

The protein belongs to the glycosyl hydrolase 35 family.

Its subcellular location is the secreted. It catalyses the reaction Hydrolysis of terminal non-reducing beta-D-galactose residues in beta-D-galactosides.. Functionally, cleaves beta-linked terminal galactosyl residues from gangliosides, glycoproteins, and glycosaminoglycans. The protein is Beta-galactosidase A (lacA) of Aspergillus niger (strain ATCC MYA-4892 / CBS 513.88 / FGSC A1513).